The primary structure comprises 545 residues: Probable intron-encoded endonuclease 4 (545 aa).

A run of 7 helical transmembrane segments spans residues 1-21 (MYLS…FFGR), 30-50 (LITC…FFEV), 81-101 (LTVA…IYSI), 119-139 (LFTF…MFVG), 140-160 (WEGV…RIAA), 177-197 (FLTI…YATV), and 200-220 (LAPY…LIGA). The tract at residues 1–239 (MYLSIIILPL…HVWLPMAMEG (239 aa)) is ndh-5 exons 1 and 2 encoded. Residues 240 to 545 (FFSRAFLKLH…NNINKSDYNK (306 aa)) form a ndh-5 intron 2 encoded region.

It in the N-terminal section; belongs to the complex I subunit 5 family. The protein in the C-terminal section; belongs to the LAGLIDADG endonuclease family.

It is found in the mitochondrion membrane. Its function is as follows. Mitochondrial DNA endonuclease involved in intron homing. The chain is Probable intron-encoded endonuclease 4 from Neurospora crassa (strain ATCC 24698 / 74-OR23-1A / CBS 708.71 / DSM 1257 / FGSC 987).